The chain runs to 315 residues: Methionyl-tRNA formyltransferase (315 aa).

113–116 contacts (6S)-5,6,7,8-tetrahydrofolate; the sequence is SLLP.

The protein belongs to the Fmt family.

It carries out the reaction L-methionyl-tRNA(fMet) + (6R)-10-formyltetrahydrofolate = N-formyl-L-methionyl-tRNA(fMet) + (6S)-5,6,7,8-tetrahydrofolate + H(+). In terms of biological role, attaches a formyl group to the free amino group of methionyl-tRNA(fMet). The formyl group appears to play a dual role in the initiator identity of N-formylmethionyl-tRNA by promoting its recognition by IF2 and preventing the misappropriation of this tRNA by the elongation apparatus. This Yersinia enterocolitica serotype O:8 / biotype 1B (strain NCTC 13174 / 8081) protein is Methionyl-tRNA formyltransferase.